The chain runs to 387 residues: 3-ketoacyl-CoA thiolase (387 aa).

Catalysis depends on cysteine 91, which acts as the Acyl-thioester intermediate. Catalysis depends on proton acceptor residues histidine 343 and cysteine 373.

The protein belongs to the thiolase-like superfamily. Thiolase family. Heterotetramer of two alpha chains (FadB) and two beta chains (FadA).

The protein resides in the cytoplasm. It carries out the reaction an acyl-CoA + acetyl-CoA = a 3-oxoacyl-CoA + CoA. Its pathway is lipid metabolism; fatty acid beta-oxidation. Catalyzes the final step of fatty acid oxidation in which acetyl-CoA is released and the CoA ester of a fatty acid two carbons shorter is formed. The polypeptide is 3-ketoacyl-CoA thiolase (Aliivibrio salmonicida (strain LFI1238) (Vibrio salmonicida (strain LFI1238))).